A 263-amino-acid chain; its full sequence is 4-hydroxy-2-oxo-heptane-1,7-dioate aldolase (263 aa).

His-45 (proton acceptor) is an active-site residue. Gln-147 lines the substrate pocket. A divalent metal cation is bound at residue Glu-149. Substrate-binding residues include Ala-174 and Asp-175. Asp-175 contributes to the a divalent metal cation binding site.

Belongs to the HpcH/HpaI aldolase family. Homohexamer; trimer of dimers. The cofactor is a divalent metal cation.

It carries out the reaction 4-hydroxy-2-oxoheptanedioate = succinate semialdehyde + pyruvate. Its pathway is aromatic compound metabolism; 4-hydroxyphenylacetate degradation; pyruvate and succinate semialdehyde from 4-hydroxyphenylacetate: step 7/7. In terms of biological role, catalyzes the reversible retro-aldol cleavage of 4-hydroxy-2-ketoheptane-1,7-dioate (HKHD) to pyruvate and succinic semialdehyde. This is 4-hydroxy-2-oxo-heptane-1,7-dioate aldolase from Salmonella arizonae (strain ATCC BAA-731 / CDC346-86 / RSK2980).